The sequence spans 241 residues: Uracil-DNA glycosylase (241 aa).

Residue Asp-73 is the Proton acceptor of the active site.

Belongs to the uracil-DNA glycosylase (UDG) superfamily. UNG family.

The protein resides in the cytoplasm. The catalysed reaction is Hydrolyzes single-stranded DNA or mismatched double-stranded DNA and polynucleotides, releasing free uracil.. Its function is as follows. Excises uracil residues from the DNA which can arise as a result of misincorporation of dUMP residues by DNA polymerase or due to deamination of cytosine. The sequence is that of Uracil-DNA glycosylase from Agrobacterium fabrum (strain C58 / ATCC 33970) (Agrobacterium tumefaciens (strain C58)).